The primary structure comprises 181 residues: Cytochrome c oxidase subunit 2 (181 aa).

5 residues coordinate Cu cation: Cys126, Glu128, Cys130, His134, and Met137. Glu128 is a binding site for Mg(2+).

This sequence belongs to the cytochrome c oxidase subunit 2 family. Component of the cytochrome c oxidase (complex IV, CIV), a multisubunit enzyme composed of a catalytic core of 3 subunits and several supernumerary subunits. The complex exists as a monomer or a dimer and forms supercomplexes (SCs) in the inner mitochondrial membrane with ubiquinol-cytochrome c oxidoreductase (cytochrome b-c1 complex, complex III, CIII). Requires Cu cation as cofactor.

It is found in the mitochondrion inner membrane. The enzyme catalyses 4 Fe(II)-[cytochrome c] + O2 + 8 H(+)(in) = 4 Fe(III)-[cytochrome c] + 2 H2O + 4 H(+)(out). Its function is as follows. Component of the cytochrome c oxidase, the last enzyme in the mitochondrial electron transport chain which drives oxidative phosphorylation. The respiratory chain contains 3 multisubunit complexes succinate dehydrogenase (complex II, CII), ubiquinol-cytochrome c oxidoreductase (cytochrome b-c1 complex, complex III, CIII) and cytochrome c oxidase (complex IV, CIV), that cooperate to transfer electrons derived from NADH and succinate to molecular oxygen, creating an electrochemical gradient over the inner membrane that drives transmembrane transport and the ATP synthase. Cytochrome c oxidase is the component of the respiratory chain that catalyzes the reduction of oxygen to water. Electrons originating from reduced cytochrome c in the intermembrane space (IMS) are transferred via the dinuclear copper A center (CU(A)) of subunit 2 and heme A of subunit 1 to the active site in subunit 1, a binuclear center (BNC) formed by heme A3 and copper B (CU(B)). The BNC reduces molecular oxygen to 2 water molecules using 4 electrons from cytochrome c in the IMS and 4 protons from the mitochondrial matrix. In Paramecium primaurelia, this protein is Cytochrome c oxidase subunit 2 (COII).